Consider the following 269-residue polypeptide: MSRLEQRFAELKAEGRSALVTFVTAGDPGYDASLEILKGLPAAGADVIELGMPFTDPMADGVAIQLATLRALEAGQTLAKTLQMVREFRVGNQTTPIVLMGYYNPIHRFGVEQFVAEAKEAGVDGLIIVDLPPEHDAELATPAQAAGIDFIRLTTPTTDDARLPRVLERSSGFVYYVSVAGVTGAGSATTEHVTEAIARLRRHTDLPISVGFGIRTPEQAAAIARLADGVVVGSALVDKIAQAKDAGQAVKDVLSLCSALADGVRAARV.

Catalysis depends on proton acceptor residues Glu-49 and Asp-60.

Belongs to the TrpA family. In terms of assembly, tetramer of two alpha and two beta chains.

It catalyses the reaction (1S,2R)-1-C-(indol-3-yl)glycerol 3-phosphate + L-serine = D-glyceraldehyde 3-phosphate + L-tryptophan + H2O. It participates in amino-acid biosynthesis; L-tryptophan biosynthesis; L-tryptophan from chorismate: step 5/5. Functionally, the alpha subunit is responsible for the aldol cleavage of indoleglycerol phosphate to indole and glyceraldehyde 3-phosphate. In Pseudomonas entomophila (strain L48), this protein is Tryptophan synthase alpha chain.